We begin with the raw amino-acid sequence, 151 residues long: Ribosome-binding factor A (151 aa).

The interval 116 to 151 (DAEVARAAANARPAGDPDPYREPRPADDDDEDDEDE) is disordered. A compositionally biased stretch (low complexity) spans 120–129 (ARAAANARPA). Residues 142–151 (DDDDEDDEDE) show a composition bias toward acidic residues.

The protein belongs to the RbfA family. As to quaternary structure, monomer. Binds 30S ribosomal subunits, but not 50S ribosomal subunits or 70S ribosomes.

The protein localises to the cytoplasm. In terms of biological role, one of several proteins that assist in the late maturation steps of the functional core of the 30S ribosomal subunit. Associates with free 30S ribosomal subunits (but not with 30S subunits that are part of 70S ribosomes or polysomes). Required for efficient processing of 16S rRNA. May interact with the 5'-terminal helix region of 16S rRNA. The chain is Ribosome-binding factor A from Thermobifida fusca (strain YX).